Reading from the N-terminus, the 95-residue chain is Selenoprotein K (95 aa).

Residues 20 to 42 traverse the membrane as a helical segment; that stretch reads LSFITDFFWGIAEFVVLFFRTLL. The segment at 47-95 is disordered; the sequence is KKRRGYGSSSDSRYDDGRGPPGNPPRRRMGRINHLQGPNPPPMAGGUGR. Residue U93 is a non-standard amino acid, selenocysteine.

It belongs to the selenoprotein K family. In terms of assembly, interacts with DERL1, DERL2, DERL3 and SELENOS. The SELENOK-SELENOS complex interacts with VCP. Interacts with ZDHHC6. Cleaved by CAPN2/m-calpain in resting macrophages but not in activated macrophages. Macrophage activation up-regulates expression of the calpain inhibitor CAST/calpastatin, resulting in inhibition of CAPN2 activity. Post-translationally, truncated SELENOK proteins produced by failed UGA/Sec decoding are ubiquitinated by the CRL2(KLHDC2) complex, which recognizes the diglycine (Gly-Gly) at the C-terminus of truncated SELENOK proteins.

It localises to the endoplasmic reticulum membrane. Its subcellular location is the cell membrane. In terms of biological role, required for Ca(2+) flux in immune cells and plays a role in T-cell proliferation and in T-cell and neutrophil migration. Involved in endoplasmic reticulum-associated degradation (ERAD) of soluble glycosylated proteins. Required for palmitoylation and cell surface expression of CD36 and involved in macrophage uptake of low-density lipoprotein and in foam cell formation. Together with ZDHHC6, required for palmitoylation of ITPR1 in immune cells, leading to regulate ITPR1 stability and function. Plays a role in protection of cells from ER stress-induced apoptosis. Protects cells from oxidative stress when overexpressed in cardiomyocytes. In Bos taurus (Bovine), this protein is Selenoprotein K.